The following is a 165-amino-acid chain: Ribonuclease H2 subunit C (165 aa).

Position 1 is an N-acetylmethionine (M1).

Belongs to the RNase H2 subunit C family. The RNase H2 complex is a heterotrimer composed of the catalytic subunit RNASEH2A and the non-catalytic subunits RNASEH2B and RNASEH2C.

It is found in the nucleus. In terms of biological role, non catalytic subunit of RNase H2, an endonuclease that specifically degrades the RNA of RNA:DNA hybrids. Participates in DNA replication, possibly by mediating the removal of lagging-strand Okazaki fragment RNA primers during DNA replication. Mediates the excision of single ribonucleotides from DNA:RNA duplexes. In Bos taurus (Bovine), this protein is Ribonuclease H2 subunit C (RNASEH2C).